Here is a 357-residue protein sequence, read N- to C-terminus: Chorismate synthase (357 aa).

The span at 38 to 49 shows a compositional bias: basic and acidic residues; that stretch reads EKDIQPDLDRRK. Positions 38–60 are disordered; sequence EKDIQPDLDRRKPGTSRYTTPRR. 2 residues coordinate NADP(+): Arg-48 and Arg-54. FMN contacts are provided by residues 125–127, 243–244, Gly-283, 298–302, and Arg-324; these read RSS, NA, and KPTSS.

It belongs to the chorismate synthase family. As to quaternary structure, homotetramer. FMNH2 is required as a cofactor.

It catalyses the reaction 5-O-(1-carboxyvinyl)-3-phosphoshikimate = chorismate + phosphate. It functions in the pathway metabolic intermediate biosynthesis; chorismate biosynthesis; chorismate from D-erythrose 4-phosphate and phosphoenolpyruvate: step 7/7. In terms of biological role, catalyzes the anti-1,4-elimination of the C-3 phosphate and the C-6 proR hydrogen from 5-enolpyruvylshikimate-3-phosphate (EPSP) to yield chorismate, which is the branch point compound that serves as the starting substrate for the three terminal pathways of aromatic amino acid biosynthesis. This reaction introduces a second double bond into the aromatic ring system. This is Chorismate synthase from Haemophilus influenzae (strain PittGG).